A 218-amino-acid polypeptide reads, in one-letter code: Adenylate kinase (218 aa).

10–15 (GAGKGT) is a binding site for ATP. The NMP stretch occupies residues 30–59 (STGDMLRAAVKAGTPLGQQAKAVMDAGKLV). AMP is bound by residues Thr-31, Arg-36, 57–59 (KLV), 85–88 (GFPR), and Gln-92. Positions 122-159 (GRRSHPASGRTYHVKFNPPKVEGKDDVTGEDLIQREDD) are LID. Residues Arg-123 and 132–133 (TY) contribute to the ATP site. The disordered stretch occupies residues 127–147 (PASGRTYHVKFNPPKVEGKDD). 2 residues coordinate AMP: Arg-156 and Arg-167. Residue Gly-203 coordinates ATP.

Belongs to the adenylate kinase family. In terms of assembly, monomer.

The protein localises to the cytoplasm. The enzyme catalyses AMP + ATP = 2 ADP. Its pathway is purine metabolism; AMP biosynthesis via salvage pathway; AMP from ADP: step 1/1. Its function is as follows. Catalyzes the reversible transfer of the terminal phosphate group between ATP and AMP. Plays an important role in cellular energy homeostasis and in adenine nucleotide metabolism. The polypeptide is Adenylate kinase (Paracidovorax citrulli (strain AAC00-1) (Acidovorax citrulli)).